Reading from the N-terminus, the 272-residue chain is Shikimate dehydrogenase (NADP(+)) (272 aa).

Residues 14-16 (SKS) and Thr61 contribute to the shikimate site. Lys65 acts as the Proton acceptor in catalysis. Residue Glu77 coordinates NADP(+). Residues Asn86 and Asp102 each coordinate shikimate. Residues 126–130 (GAGGA), 150–155 (NRTFSK), and Met213 each bind NADP(+). Position 215 (Tyr215) interacts with shikimate. Position 237 (Gly237) interacts with NADP(+).

It belongs to the shikimate dehydrogenase family. Homodimer.

It catalyses the reaction shikimate + NADP(+) = 3-dehydroshikimate + NADPH + H(+). It participates in metabolic intermediate biosynthesis; chorismate biosynthesis; chorismate from D-erythrose 4-phosphate and phosphoenolpyruvate: step 4/7. In terms of biological role, involved in the biosynthesis of the chorismate, which leads to the biosynthesis of aromatic amino acids. Catalyzes the reversible NADPH linked reduction of 3-dehydroshikimate (DHSA) to yield shikimate (SA). This Psychromonas ingrahamii (strain DSM 17664 / CCUG 51855 / 37) protein is Shikimate dehydrogenase (NADP(+)).